The primary structure comprises 314 residues: UDP-glucose 4-epimerase (314 aa).

NAD(+)-binding positions include 11–12 (FI), 31–36 (DNFATG), 56–57 (DI), and 77–81 (LAAQI). The substrate site is built by serine 121 and tyrosine 146. Tyrosine 146 and lysine 150 together coordinate NAD(+). The Proton acceptor role is filled by tyrosine 146. Residues asparagine 175, 189–190 (VV), 204–206 (RVF), arginine 213, and 271–274 (RLGD) each bind substrate.

The protein belongs to the NAD(P)-dependent epimerase/dehydratase family. In terms of assembly, homodimer. NAD(+) serves as cofactor.

The enzyme catalyses UDP-alpha-D-glucose = UDP-alpha-D-galactose. The protein operates within carbohydrate metabolism; galactose metabolism. Functionally, involved in the metabolism of galactose. Catalyzes the conversion of UDP-galactose (UDP-Gal) to UDP-glucose (UDP-Glc) through a mechanism involving the transient reduction of NAD. This Mycobacterium tuberculosis (strain CDC 1551 / Oshkosh) protein is UDP-glucose 4-epimerase (galE1).